Consider the following 829-residue polypeptide: DNA ligase (829 aa).

NAD(+) is bound by residues 38–42 (DAEYD), 87–88 (SL), and Glu127. Lys129 acts as the N6-AMP-lysine intermediate in catalysis. Arg150, Glu187, Lys305, and Lys329 together coordinate NAD(+). Zn(2+) contacts are provided by Cys455, Cys458, Cys473, and Cys479. The interval 534–564 (ETADKGSSENENGDAETVSGDLSKYNTQNGK) is disordered. A BRCT domain is found at 752-829 (GINKAVAGKT…SEAELLTLLC (78 aa)).

The protein belongs to the NAD-dependent DNA ligase family. LigA subfamily. Requires Mg(2+) as cofactor. It depends on Mn(2+) as a cofactor.

The catalysed reaction is NAD(+) + (deoxyribonucleotide)n-3'-hydroxyl + 5'-phospho-(deoxyribonucleotide)m = (deoxyribonucleotide)n+m + AMP + beta-nicotinamide D-nucleotide.. Functionally, DNA ligase that catalyzes the formation of phosphodiester linkages between 5'-phosphoryl and 3'-hydroxyl groups in double-stranded DNA using NAD as a coenzyme and as the energy source for the reaction. It is essential for DNA replication and repair of damaged DNA. The protein is DNA ligase of Neisseria gonorrhoeae (strain ATCC 700825 / FA 1090).